The primary structure comprises 311 residues: Probable inactive peptidyl-prolyl cis-trans isomerase-like 6 (311 aa).

Positions 145-308 constitute a PPIase cyclophilin-type domain; sequence FLDICIDSSP…HMCRITDSGD (164 aa).

This sequence belongs to the cyclophilin-type PPIase family.

Its function is as follows. Probable inactive PPIase with no peptidyl-prolyl cis-trans isomerase activity. The sequence is that of Probable inactive peptidyl-prolyl cis-trans isomerase-like 6 from Homo sapiens (Human).